The chain runs to 344 residues: Oxygen sensor histidine kinase NreB (344 aa).

4 residues coordinate [4Fe-4S] cluster: Cys58, Cys61, Cys73, and Cys76. Residues 147 to 344 (ENERKRISRE…GTIITLDIPI (198 aa)) form the Histidine kinase domain. Phosphohistidine; by autocatalysis is present on His158.

The cofactor is [4Fe-4S] cluster. In terms of processing, autophosphorylated.

It is found in the cytoplasm. It carries out the reaction ATP + protein L-histidine = ADP + protein N-phospho-L-histidine.. Member of the two-component regulatory system NreB/NreC involved in the control of dissimilatory nitrate/nitrite reduction in response to oxygen. NreB functions as a direct oxygen sensor histidine kinase which is autophosphorylated, in the absence of oxygen, probably at the conserved histidine residue, and transfers its phosphate group probably to a conserved aspartate residue of NreC. NreB/NreC activates the expression of the nitrate (narGHJI) and nitrite (nir) reductase operons, as well as the putative nitrate transporter gene narT. The protein is Oxygen sensor histidine kinase NreB (nreB) of Staphylococcus epidermidis (strain ATCC 12228 / FDA PCI 1200).